The chain runs to 307 residues: MSQNKIYDVAIIGAGPGALTAAIYTSRGNLDTVFIDNAAPGGKLIYASKIENWPGDTIVKGTDLAIRFFEHAQAFGAKYEYGKVVDLINIKDDLKELVLEDGKKIQAKSVIIASGMVSRKPREILNYDEFENRGVSYCVICDGPMYGHNPAIIIGGGNSAVEEGTFLSSIASKVYVIVRDSDFIAEKALVNDLKSRKNIEVLFNASVKELHGKDALEYAIVNHNGKEVKLEVASLFPYIGFLPSAEYAKNAGVLEPNGFIKTDEFMETKVPGIYAIGDIRIKDIRQILTATSDGTIAGKILTNRIKK.

36-43 (DNAAPGGK) lines the FAD pocket. Cysteine 138 and cysteine 141 are joined by a disulfide. FAD is bound at residue 278 to 287 (DIRIKDIRQI).

The protein belongs to the class-II pyridine nucleotide-disulfide oxidoreductase family. In terms of assembly, homodimer. The cofactor is FAD.

The protein resides in the cytoplasm. The enzyme catalyses [thioredoxin]-dithiol + NADP(+) = [thioredoxin]-disulfide + NADPH + H(+). The polypeptide is Thioredoxin reductase (trxB) (Mycoplasmopsis pulmonis (strain UAB CTIP) (Mycoplasma pulmonis)).